A 216-amino-acid polypeptide reads, in one-letter code: Pyrophosphatase PpaX (216 aa).

The Nucleophile role is filled by D9.

Belongs to the HAD-like hydrolase superfamily. PpaX family. It depends on Mg(2+) as a cofactor.

It carries out the reaction diphosphate + H2O = 2 phosphate + H(+). Hydrolyzes pyrophosphate formed during P-Ser-HPr dephosphorylation by HPrK/P. Might play a role in controlling the intracellular pyrophosphate pool. This Bacillus cereus (strain B4264) protein is Pyrophosphatase PpaX.